Reading from the N-terminus, the 297-residue chain is Bifunctional protein FolD 2 (297 aa).

NADP(+)-binding positions include 172-174, Thr-199, and Val-240; that span reads GRG.

This sequence belongs to the tetrahydrofolate dehydrogenase/cyclohydrolase family. In terms of assembly, homodimer.

The enzyme catalyses (6R)-5,10-methylene-5,6,7,8-tetrahydrofolate + NADP(+) = (6R)-5,10-methenyltetrahydrofolate + NADPH. It carries out the reaction (6R)-5,10-methenyltetrahydrofolate + H2O = (6R)-10-formyltetrahydrofolate + H(+). It functions in the pathway one-carbon metabolism; tetrahydrofolate interconversion. In terms of biological role, catalyzes the oxidation of 5,10-methylenetetrahydrofolate to 5,10-methenyltetrahydrofolate and then the hydrolysis of 5,10-methenyltetrahydrofolate to 10-formyltetrahydrofolate. This chain is Bifunctional protein FolD 2, found in Paenarthrobacter aurescens (strain TC1).